Consider the following 619-residue polypeptide: 1-deoxy-D-xylulose-5-phosphate synthase (619 aa).

Residues H76 and 117 to 119 each bind thiamine diphosphate; that span reads AHS. D148 provides a ligand contact to Mg(2+). Residues 149–150, N177, Y284, and E366 contribute to the thiamine diphosphate site; that span reads GA. Residue N177 coordinates Mg(2+).

The protein belongs to the transketolase family. DXPS subfamily. Homodimer. It depends on Mg(2+) as a cofactor. Thiamine diphosphate is required as a cofactor.

The catalysed reaction is D-glyceraldehyde 3-phosphate + pyruvate + H(+) = 1-deoxy-D-xylulose 5-phosphate + CO2. It functions in the pathway metabolic intermediate biosynthesis; 1-deoxy-D-xylulose 5-phosphate biosynthesis; 1-deoxy-D-xylulose 5-phosphate from D-glyceraldehyde 3-phosphate and pyruvate: step 1/1. Catalyzes the acyloin condensation reaction between C atoms 2 and 3 of pyruvate and glyceraldehyde 3-phosphate to yield 1-deoxy-D-xylulose-5-phosphate (DXP). This chain is 1-deoxy-D-xylulose-5-phosphate synthase, found in Azoarcus sp. (strain BH72).